Here is a 513-residue protein sequence, read N- to C-terminus: Steroid (22S)-hydroxylase (513 aa).

The helical transmembrane segment at 8 to 28 (TLLPLLLLPSLLSLLLFLILL) threads the bilayer. Residues 252–277 (DIKEEDQEEEEVKTEDEAEMSKSDHV) form a disordered region. The segment covering 254–269 (KEEDQEEEEVKTEDEA) has biased composition (acidic residues). Cysteine 462 is a heme binding site.

The protein belongs to the cytochrome P450 family. Heme serves as cofactor. Expressed in stems, leaves, shoots, and roots, with a higher expression in siliques and apical shoots.

The protein resides in the membrane. The catalysed reaction is a C27-steroid + reduced [NADPH--hemoprotein reductase] + O2 = a (22S)-22-hydroxy C27-steroid + oxidized [NADPH--hemoprotein reductase] + H2O + H(+). The enzyme catalyses a C28-steroid + reduced [NADPH--hemoprotein reductase] + O2 = a (22S)-22-hydroxy C28-steroid + oxidized [NADPH--hemoprotein reductase] + H2O + H(+). It catalyses the reaction a C29-steroid + reduced [NADPH--hemoprotein reductase] + O2 = a (22S)-22-hydroxy C29-steroid + oxidized [NADPH--hemoprotein reductase] + H2O + H(+). It carries out the reaction cholesterol + reduced [NADPH--hemoprotein reductase] + O2 = (22S)-22-hydroxycholesterol + oxidized [NADPH--hemoprotein reductase] + H2O + H(+). The catalysed reaction is cholestanol + reduced [NADPH--hemoprotein reductase] + O2 = (22S)-22-hydroxycholestanol + oxidized [NADPH--hemoprotein reductase] + H2O + H(+). The enzyme catalyses campestanol + reduced [NADPH--hemoprotein reductase] + O2 = 6-deoxycathasterone + oxidized [NADPH--hemoprotein reductase] + H2O + H(+). It catalyses the reaction campesterol + reduced [NADPH--hemoprotein reductase] + O2 = (22S)-22-hydroxycampesterol + oxidized [NADPH--hemoprotein reductase] + H2O + H(+). It carries out the reaction 6-oxocampestanol + reduced [NADPH--hemoprotein reductase] + O2 = cathasterone + oxidized [NADPH--hemoprotein reductase] + H2O + H(+). The catalysed reaction is sitosterol + reduced [NADPH--hemoprotein reductase] + O2 = (22S)-22-hydroxysitosterol + oxidized [NADPH--hemoprotein reductase] + H2O + H(+). It participates in plant hormone biosynthesis; brassinosteroid biosynthesis. Its function is as follows. Catalyzes the C22-alpha-hydroxylation step in brassinosteroids biosynthesis. Converts campesterol (CR) to (22S)-22-hydroxycampesterol (22-OHCR, 22-hydroxyCR), campestanol (CN) to 6-deoxycathasterone (6-deoxoCT), and 6-oxocampestanol (6-oxoCN) to cathasterone (CT). Can also use cholesterol and cholestanol as substrates. The chain is Steroid (22S)-hydroxylase from Arabidopsis thaliana (Mouse-ear cress).